The chain runs to 152 residues: Ribosome maturation factor RimP (152 aa).

The protein belongs to the RimP family.

It is found in the cytoplasm. Functionally, required for maturation of 30S ribosomal subunits. The sequence is that of Ribosome maturation factor RimP from Alkaliphilus metalliredigens (strain QYMF).